Consider the following 369-residue polypeptide: Probable L-tyrosine/L-aspartate decarboxylase (369 aa).

At K224 the chain carries N6-(pyridoxal phosphate)lysine.

It belongs to the group II decarboxylase family. MfnA subfamily. The cofactor is pyridoxal 5'-phosphate.

It carries out the reaction L-tyrosine + H(+) = tyramine + CO2. It catalyses the reaction L-aspartate + H(+) = beta-alanine + CO2. The protein operates within cofactor biosynthesis; methanofuran biosynthesis. It participates in cofactor biosynthesis; coenzyme A biosynthesis. Its function is as follows. Catalyzes the decarboxylation of L-tyrosine to produce tyramine for methanofuran biosynthesis. Can also catalyze the decarboxylation of L-aspartate to produce beta-alanine for coenzyme A (CoA) biosynthesis. The sequence is that of Probable L-tyrosine/L-aspartate decarboxylase from Methanospirillum hungatei JF-1 (strain ATCC 27890 / DSM 864 / NBRC 100397 / JF-1).